We begin with the raw amino-acid sequence, 197 residues long: Fucoxanthin-chlorophyll a-c binding protein C, chloroplastic (197 aa).

The N-terminal 31 residues, 1-31 (MKTAVIASLIAGAAAFAPAKNAARTSVATNM), are a transit peptide targeting the chloroplast. Transmembrane regions (helical) follow at residues 73 to 94 (ISMLAVVGYLVQEAGVRLPGTI), 113 to 133 (IPAGGLVQLLFFIGVLESSVM), and 174 to 196 (GRAAQMGILAFMVHEQLGVSLLP).

This sequence belongs to the fucoxanthin chlorophyll protein family. In terms of assembly, the LHC complex of chromophytic algae is composed of fucoxanthin, chlorophyll A and C bound non-covalently by fucoxanthin chlorophyll proteins (FCPs). The ratio of the pigments in LHC; fucoxanthin: chlorophyll C: chlorophyll A; (0.6-1): (0.1-0.3): (1).

The protein resides in the plastid. It localises to the chloroplast thylakoid membrane. Its function is as follows. The light-harvesting complex (LHC) functions as a light receptor, it captures and delivers excitation energy to photosystems with which it is closely associated. Energy is transferred from the carotenoid and chlorophyll C (or B) to chlorophyll A and the photosynthetic reaction centers where it is used to synthesize ATP and reducing power. This Phaeodactylum tricornutum (Diatom) protein is Fucoxanthin-chlorophyll a-c binding protein C, chloroplastic (FCPC).